The primary structure comprises 684 residues: Ski-like protein (684 aa).

Residues K50 and K70 each participate in a glycyl lysine isopeptide (Lys-Gly) (interchain with G-Cter in SUMO2) cross-link. Positions 420–454 are disordered; sequence SQSKELTKTEASKSISRQSEKAHSSGKLQKTVSYP. Phosphoserine is present on S452. Glycyl lysine isopeptide (Lys-Gly) (interchain with G-Cter in SUMO2) cross-links involve residues K489 and K527. Positions 536–684 form a coiled coil; it reads RTYLKQQEKL…ILKSSKTAKE (149 aa).

Belongs to the SKI family. As to quaternary structure, interacts with CPNE4 (via VWFA domain). Interacts with SMAD2, SMAD3 and RNF111. Isoform 1 interacts with WWP1. Ubiquitinated by RNF111 and ARK2C, promoting proteasomal degradation, leading to enhance the BMP-Smad signaling. Isoform SNON and isoform SNOA are widely expressed. Highest expression is found in skeletal muscle, followed by placenta and lung. Lowest expression in heart, brain and pancreas. Isoform SNOI expression is restricted to skeletal muscle.

In terms of biological role, may have regulatory role in cell division or differentiation in response to extracellular signals. The protein is Ski-like protein (SKIL) of Homo sapiens (Human).